A 250-amino-acid polypeptide reads, in one-letter code: MRIALTNDDGIQAPGLRAIYKALIEAGHTVDVVAPVTEQSAVGHAVTIAMPLRVKVFHENGFRGHGVYGTPTDCMKLGLSSLLEHKPELVVSGINAGANVGPDILYSGTVSAATEAAHMGYRAVALSYDSFRPEDISAHARHAAALLPHIEWAGLPERCVVNINYPAVPVESIKGVRVCPQTRAVWHDWYEHRTDPRGGSYWWLNGVIPPESVAPGTDRALLTEGYITVTPLRFDFTDSETLTRLASLEE.

D8, D9, S40, and N95 together coordinate a divalent metal cation.

This sequence belongs to the SurE nucleotidase family. Requires a divalent metal cation as cofactor.

Its subcellular location is the cytoplasm. The enzyme catalyses a ribonucleoside 5'-phosphate + H2O = a ribonucleoside + phosphate. In terms of biological role, nucleotidase that shows phosphatase activity on nucleoside 5'-monophosphates. In Nitratidesulfovibrio vulgaris (strain DP4) (Desulfovibrio vulgaris), this protein is 5'-nucleotidase SurE.